The sequence spans 963 residues: Importin-13 (963 aa).

20 HEAT repeats span residues 24–54 (ENVEKALHQLYYDPNIENKNLAQKWLMQAQV), 56–88 (PQAWHFSWQLLQPDKVPEIQYFGASALHIKISR), 95–135 (TDQY…LSMM), 142–179 (AVADMVRLFQAEDSPVDGQGRCLALLELLTVLPEEFQT), 194–231 (LAVECGAVFPLLEQLLQQPSSPSCVRQKVLKCFSSWVQ), 236–268 (LQDCEALIQAAFAALQDSELFDSSVEAIVNAIS), 276–325 (VNTL…ALLD), 330–372 (WQSF…DDIL), 375–438 (EAEK…YEML), 440–476 (AELLSNLYDKLGRLLTSSEEPYSWQHTEALLYGFQSI), 487–522 (VVPGLIGLIPRISISNVQLADTVMFTIGALSEWLAD), 524–558 (PVMINSVLPLVLHALGNPELSVSSVSTLKKICREC), 562–600 (LPPYAANIVAVSQDVLMKQIHKTSQCMWLMQALGFLLSA), 603–648 (VEEI…SNLF), 676–716 (PVVV…VKTL), 720–754 (FAPMVPQLCEMLGRMYSTIPQASALDLTRQLVHIF), 761–803 (FPPI…ALKR), 815–845 (VKAVFQCAVLALKFPEAPTVKASCGFFTELL), 860–893 (EDGRMLLIAVLEAIGGQASRSLMDCFADILFALN), and 897–931 (FSLLSMWIKEALQPPGFPSARLSPEQKDTFSQQIL). One can recognise an Importin N-terminal domain in the interval 45–111 (AQKWLMQAQV…KAQLFTQITR (67 aa)).

This sequence belongs to the importin beta family. Interacts with UBC9, RAN, RBM8A, eIF-1A and PAX6. As to expression, expressed in fetal brain, heart, intestine and kidney.

It is found in the cytoplasm. The protein localises to the nucleus. Its function is as follows. Functions in nuclear protein import as nuclear transport receptor. Serves as receptor for nuclear localization signals (NLS) in cargo substrates. Is thought to mediate docking of the importin/substrate complex to the nuclear pore complex (NPC) through binding to nucleoporin and the complex is subsequently translocated through the pore by an energy requiring, Ran-dependent mechanism. At the nucleoplasmic side of the NPC, Ran binds to the importin, the importin/substrate complex dissociates and importin is re-exported from the nucleus to the cytoplasm where GTP hydrolysis releases Ran. The directionality of nuclear import is thought to be conferred by an asymmetric distribution of the GTP- and GDP-bound forms of Ran between the cytoplasm and nucleus. Mediates the nuclear import of UBC9, the RBM8A/MAGOH complex, PAX6 and probably other members of the paired homeobox family. Also mediates nuclear export of eIF-1A, and the cytoplasmic release of eIF-1A is triggered by the loading of import substrates onto IPO13. The chain is Importin-13 (IPO13) from Homo sapiens (Human).